The following is a 202-amino-acid chain: Imidazoleglycerol-phosphate dehydratase (202 aa).

Belongs to the imidazoleglycerol-phosphate dehydratase family.

It is found in the cytoplasm. The enzyme catalyses D-erythro-1-(imidazol-4-yl)glycerol 3-phosphate = 3-(imidazol-4-yl)-2-oxopropyl phosphate + H2O. Its pathway is amino-acid biosynthesis; L-histidine biosynthesis; L-histidine from 5-phospho-alpha-D-ribose 1-diphosphate: step 6/9. The sequence is that of Imidazoleglycerol-phosphate dehydratase from Synechococcus sp. (strain CC9605).